The primary structure comprises 212 residues: Ribosomal RNA small subunit methyltransferase G (212 aa).

S-adenosyl-L-methionine is bound by residues glycine 80, leucine 85, 131–132 (AE), and arginine 146.

This sequence belongs to the methyltransferase superfamily. RNA methyltransferase RsmG family.

The protein localises to the cytoplasm. It catalyses the reaction guanosine(527) in 16S rRNA + S-adenosyl-L-methionine = N(7)-methylguanosine(527) in 16S rRNA + S-adenosyl-L-homocysteine. In terms of biological role, specifically methylates the N7 position of guanine in position 527 of 16S rRNA. This is Ribosomal RNA small subunit methyltransferase G from Xanthomonas oryzae pv. oryzae (strain KACC10331 / KXO85).